The following is a 311-amino-acid chain: Large ribosomal subunit protein uL18 (311 aa).

This sequence belongs to the universal ribosomal protein uL18 family. As to quaternary structure, component of the large ribosomal subunit (LSU).

The protein resides in the cytoplasm. The protein localises to the nucleus. Functionally, component of the ribosome, a large ribonucleoprotein complex responsible for the synthesis of proteins in the cell. The small ribosomal subunit (SSU) binds messenger RNAs (mRNAs) and translates the encoded message by selecting cognate aminoacyl-transfer RNA (tRNA) molecules. The large subunit (LSU) contains the ribosomal catalytic site termed the peptidyl transferase center (PTC), which catalyzes the formation of peptide bonds, thereby polymerizing the amino acids delivered by tRNAs into a polypeptide chain. The nascent polypeptides leave the ribosome through a tunnel in the LSU and interact with protein factors that function in enzymatic processing, targeting, and the membrane insertion of nascent chains at the exit of the ribosomal tunnel. This is Large ribosomal subunit protein uL18 (RPL5) from Eimeria tenella (Coccidian parasite).